The chain runs to 133 residues: Large-conductance mechanosensitive channel (133 aa).

A run of 2 helical transmembrane segments spans residues 10–30 (FAVKGNVVDMAVGIVIGAAFG) and 76–96 (GIFVQTLVDFIIIAFAIFLVV).

This sequence belongs to the MscL family. In terms of assembly, homopentamer.

The protein localises to the cell inner membrane. Channel that opens in response to stretch forces in the membrane lipid bilayer. May participate in the regulation of osmotic pressure changes within the cell. The sequence is that of Large-conductance mechanosensitive channel from Chlorobium phaeobacteroides (strain BS1).